The following is a 375-amino-acid chain: Growth/differentiation factor 8 (375 aa).

The N-terminal stretch at 1–23 is a signal peptide; sequence MQKLAVYVYIYLFVQISVDPVAL. Positions 24 to 266 are excised as a propeptide; it reads DGSSQPTENT…VTDTPKRSRR (243 aa). The N-linked (GlcNAc...) asparagine glycan is linked to Asn71. Cystine bridges form between Cys272–Cys282, Cys281–Cys340, Cys309–Cys372, and Cys313–Cys374.

The protein belongs to the TGF-beta family. As to quaternary structure, homodimer; disulfide-linked.

The protein localises to the secreted. Acts specifically as a negative regulator of skeletal muscle growth. The polypeptide is Growth/differentiation factor 8 (MSTN) (Excalfactoria chinensis (Blue-breasted quail)).